Here is an 82-residue protein sequence, read N- to C-terminus: ATP synthase subunit c (82 aa).

Helical transmembrane passes span 6–26 (LGLT…GCGI) and 49–69 (IMVT…YALV).

This sequence belongs to the ATPase C chain family. As to quaternary structure, F-type ATPases have 2 components, F(1) - the catalytic core - and F(0) - the membrane proton channel. F(1) has five subunits: alpha(3), beta(3), gamma(1), delta(1), epsilon(1). F(0) has three main subunits: a(1), b(2) and c(10-14). The alpha and beta chains form an alternating ring which encloses part of the gamma chain. F(1) is attached to F(0) by a central stalk formed by the gamma and epsilon chains, while a peripheral stalk is formed by the delta and b chains.

The protein localises to the cell inner membrane. Functionally, f(1)F(0) ATP synthase produces ATP from ADP in the presence of a proton or sodium gradient. F-type ATPases consist of two structural domains, F(1) containing the extramembraneous catalytic core and F(0) containing the membrane proton channel, linked together by a central stalk and a peripheral stalk. During catalysis, ATP synthesis in the catalytic domain of F(1) is coupled via a rotary mechanism of the central stalk subunits to proton translocation. In terms of biological role, key component of the F(0) channel; it plays a direct role in translocation across the membrane. A homomeric c-ring of between 10-14 subunits forms the central stalk rotor element with the F(1) delta and epsilon subunits. The chain is ATP synthase subunit c from Nitratidesulfovibrio vulgaris (strain ATCC 29579 / DSM 644 / CCUG 34227 / NCIMB 8303 / VKM B-1760 / Hildenborough) (Desulfovibrio vulgaris).